Reading from the N-terminus, the 452-residue chain is Solute carrier family 52, riboflavin transporter, member 3-B (452 aa).

The next 5 membrane-spanning stretches (helical) occupy residues 11–31, 38–58, 73–93, 111–131, and 138–158; these read LFGI…PLIV, WLLP…PLFI, PVIY…AFLW, LSFL…PFMM, and LTTY…VALV. 4 N-linked (GlcNAc...) asparagine glycosylation sites follow: Asn168, Asn174, Asn179, and Asn193. 6 helical membrane passes run 199-219, 285-305, 321-341, 344-364, 381-401, and 412-432; these read FFLF…LLNL, VFIF…LPSV, AATL…FVPI, LVLM…IMAM, ALIV…KVII, and ALVW…LSMF.

This sequence belongs to the riboflavin transporter family.

It localises to the cell membrane. It carries out the reaction riboflavin(in) = riboflavin(out). In terms of biological role, plasma membrane transporter mediating the uptake by cells of the water soluble vitamin B2/riboflavin that plays a key role in biochemical oxidation-reduction reactions of the carbohydrate, lipid, and amino acid metabolism. The sequence is that of Solute carrier family 52, riboflavin transporter, member 3-B (slc52a3b) from Danio rerio (Zebrafish).